A 468-amino-acid chain; its full sequence is Cysteine--tRNA ligase (468 aa).

C33 provides a ligand contact to Zn(2+). The short motif at 35 to 45 (ATVQGLPHIGH) is the 'HIGH' region element. Residues C211, H236, and E240 each contribute to the Zn(2+) site. Positions 267 to 271 (KMSKS) match the 'KMSKS' region motif. K270 serves as a coordination point for ATP.

This sequence belongs to the class-I aminoacyl-tRNA synthetase family. In terms of assembly, monomer. Zn(2+) serves as cofactor.

The protein localises to the cytoplasm. The catalysed reaction is tRNA(Cys) + L-cysteine + ATP = L-cysteinyl-tRNA(Cys) + AMP + diphosphate. This Mycobacterium avium (strain 104) protein is Cysteine--tRNA ligase.